We begin with the raw amino-acid sequence, 389 residues long: Phospho-N-acetylmuramoyl-pentapeptide-transferase (389 aa).

10 consecutive transmembrane segments (helical) span residues 25–45, 74–94, 97–117, 134–154, 190–210, 222–242, 259–279, 286–306, 311–331, and 366–386; these read RAVMANLTALVIGLAAGPWVI, MGGVLVLVSIAISTVLWCDWG, FIWVVMLVTLGYGAIGWVDDY, FFWQTLIGLVAAVYLAFSVSE, VSYPLGVAGFIVLTYLVIVGS, GLVIMPVVLVGGALGAFAYVM, AGELLIFCSAMAGAGLAFLWF, VFMGDVGALALGGALGTVAVI, IVLFVMGGIFVVETVSVMLQV, and QVTVRFWIVTMLLVLIGLSTL.

It belongs to the glycosyltransferase 4 family. MraY subfamily. It depends on Mg(2+) as a cofactor.

The protein localises to the cell inner membrane. It catalyses the reaction UDP-N-acetyl-alpha-D-muramoyl-L-alanyl-gamma-D-glutamyl-meso-2,6-diaminopimeloyl-D-alanyl-D-alanine + di-trans,octa-cis-undecaprenyl phosphate = di-trans,octa-cis-undecaprenyl diphospho-N-acetyl-alpha-D-muramoyl-L-alanyl-D-glutamyl-meso-2,6-diaminopimeloyl-D-alanyl-D-alanine + UMP. It participates in cell wall biogenesis; peptidoglycan biosynthesis. Functionally, catalyzes the initial step of the lipid cycle reactions in the biosynthesis of the cell wall peptidoglycan: transfers peptidoglycan precursor phospho-MurNAc-pentapeptide from UDP-MurNAc-pentapeptide onto the lipid carrier undecaprenyl phosphate, yielding undecaprenyl-pyrophosphoryl-MurNAc-pentapeptide, known as lipid I. This chain is Phospho-N-acetylmuramoyl-pentapeptide-transferase, found in Cupriavidus pinatubonensis (strain JMP 134 / LMG 1197) (Cupriavidus necator (strain JMP 134)).